A 194-amino-acid polypeptide reads, in one-letter code: Large ribosomal subunit protein eL15 (194 aa).

A disordered region spans residues 160–194 (RGLTSAGKKGRGLMYKGKGAEKVRPSVRANSKKAK).

This sequence belongs to the eukaryotic ribosomal protein eL15 family.

The polypeptide is Large ribosomal subunit protein eL15 (Methanococcus maripaludis (strain C6 / ATCC BAA-1332)).